Consider the following 58-residue polypeptide: Large ribosomal subunit protein bL32 (58 aa).

The segment at 1-24 (MAVPKKKTSKSKRDKRKATWKRKA) is disordered.

Belongs to the bacterial ribosomal protein bL32 family.

The polypeptide is Large ribosomal subunit protein bL32 (Synechococcus sp. (strain ATCC 27144 / PCC 6301 / SAUG 1402/1) (Anacystis nidulans)).